We begin with the raw amino-acid sequence, 143 residues long: Actin-depolymerizing factor (143 aa).

In terms of domain architecture, ADF-H spans 11–143 (GMGVADHSKN…DLEVLRERAH (133 aa)).

The protein belongs to the actin-binding proteins ADF family.

Its function is as follows. Actin-depolymerizing protein. Severs actin filaments (F-actin) and binds to actin monomers. This chain is Actin-depolymerizing factor, found in Vitis vinifera (Grape).